Consider the following 440-residue polypeptide: Putative sodium-coupled neutral amino acid transporter 8 (440 aa).

Helical transmembrane passes span 29 to 49 (AIFI…PWAF), 58 to 78 (AIMV…ILGY), 100 to 120 (IGKL…VAFL), 156 to 176 (FAIT…KEIS), 183 to 203 (ILGT…YYVM), 223 to 243 (MFSV…CVTI), 255 to 275 (WAAV…FTGI), 300 to 320 (VIIA…IILL), 350 to 370 (VVIT…VPDI), 373 to 393 (VISV…GLCL), and 418 to 438 (VVCG…EIIA).

Belongs to the amino acid/polyamine transporter 2 family.

It is found in the membrane. In terms of biological role, putative sodium-dependent amino acid/proton antiporter. This is Putative sodium-coupled neutral amino acid transporter 8 (slc38a8) from Xenopus tropicalis (Western clawed frog).